Here is a 130-residue protein sequence, read N- to C-terminus: Large ribosomal subunit protein uL14 (130 aa).

This sequence belongs to the universal ribosomal protein uL14 family. As to quaternary structure, part of the 50S ribosomal subunit. Forms a cluster with proteins L3 and L19. In the 70S ribosome, L14 and L19 interact and together make contacts with the 16S rRNA in bridges B5 and B8.

In terms of biological role, binds to 23S rRNA. Forms part of two intersubunit bridges in the 70S ribosome. The protein is Large ribosomal subunit protein uL14 of Leptospira biflexa serovar Patoc (strain Patoc 1 / Ames).